The sequence spans 349 residues: Protein AMBP (349 aa).

A signal peptide spans 1–19; it reads MQGLGALFLLLTACLTLKA. 3-hydroxy-L-kynurenine contacts are provided by Cys-52 and Lys-110. Cys-90 and Cys-187 are oxidised to a cystine. Asn-114 is a glycosylation site (N-linked (GlcNAc...) asparagine). 3-hydroxy-L-kynurenine-binding residues include Lys-136 and Lys-148. An O-linked (Xyl...) (chondroitin sulfate) serine glycan is attached at Ser-214. Disulfide bonds link Cys-230-Cys-280, Cys-239-Cys-263, Cys-255-Cys-276, Cys-286-Cys-336, Cys-295-Cys-319, and Cys-311-Cys-332. BPTI/Kunitz inhibitor domains follow at residues 230–280 and 286–336; these read CQLN…LQTC and CNLP…KEYC. A glycan (N-linked (GlcNAc...) asparagine) is linked at Asn-233.

In the N-terminal section; belongs to the calycin superfamily. Lipocalin family. As to quaternary structure, monomer. Homodimer. In plasma, it occurs as a monomer or dimer and in covalently-linked complexes with immunoglobulin A (IgA), ALB/albumin and F2/prothrombin. Chromophore-bound alpha-1-microglobulin interacts with the constant region of immunoglobulin A. Chromophore-bound alpha-1-microglobulin interacts with ALB with molar ratio 2:1 and 1:1; this interaction does not prevent fatty acid binding to ALB. Interacts with F2/prothrombin (via N-terminus) with molar ratio 2:1 and 1:1; this interaction does not prevent the activation of prothrombin to thrombin. Interacts with NDUFAB1, a subunit of mitochondrial complex I. Interacts with FN1. I-alpha-I plasma protease inhibitors are assembled from one or two heavy chains (HC) and one light chain, bikunin. Inter-alpha-inhibitor (I-alpha-I) is composed of ITIH1/HC1, ITIH2/HC2 and bikunin, and pre-alpha-inhibitor (P-alpha-I) of ITIH3/HC3 and bikunin. Interacts with TNFAIP6 (via Link domain). In terms of assembly, monomer. Also occurs as a complex with tryptase in mast cells. In terms of processing, the precursor is proteolytically processed into separately functioning proteins. Post-translationally, 3-hydroxykynurenine, an oxidized tryptophan metabolite that is common in biological fluids, reacts with Cys-53, Lys-111, Lys-137, and Lys-149 to form heterogeneous polycyclic chromophores including hydroxanthommatin. The reaction by alpha-1-microglobulin is autocatalytic; the human protein forms chromophore even when expressed in insect and bacterial cells. The chromophore can react with accessible cysteines forming non-reducible thioether cross-links with other molecules of alpha-1-microglobulin or with other proteins such as Ig alpha-1 chain C region 'Cys-352'. Heavy chains are interlinked with bikunin via a chondroitin 4-sulfate bridge to the C-terminal aspartate. In terms of processing, proteolytically cleaved by PRSS3 at Kunitz domain 2. Expressed by the liver and secreted in plasma.

Its subcellular location is the secreted. It localises to the endoplasmic reticulum. The protein localises to the cytoplasm. It is found in the cytosol. The protein resides in the cell membrane. Its subcellular location is the nucleus membrane. It localises to the mitochondrion inner membrane. The protein localises to the extracellular space. It is found in the extracellular matrix. Antioxidant and tissue repair protein with reductase, heme-binding and radical-scavenging activities. Removes and protects against harmful oxidants and repairs macromolecules in intravascular and extravascular spaces and in intracellular compartments. Intravascularly, plays a regulatory role in red cell homeostasis by preventing heme- and reactive oxygen species-induced cell damage. Binds and degrades free heme to protect fetal and adult red blood cells from hemolysis. Reduces extracellular methemoglobin, a Fe3+ (ferric) form of hemoglobin that cannot bind oxygen, back to the Fe2+ (ferrous) form deoxyhemoglobin, which has oxygen-carrying potential. Upon acute inflammation, inhibits oxidation of low-density lipoprotein particles by MPO and limits vascular damage. Extravascularly, protects from oxidation products formed on extracellular matrix structures and cell membranes. Catalyzes the reduction of carbonyl groups on oxidized collagen fibers and preserves cellular and extracellular matrix ultrastructures. Importantly, counteracts the oxidative damage at blood-placenta interface, preventing leakage of free fetal hemoglobin into the maternal circulation. Intracellularly, has a role in maintaining mitochondrial redox homeostasis. Bound to complex I of the respiratory chain of mitochondria, may scavenge free radicals and preserve mitochondrial ATP synthesis. Protects renal tubule epithelial cells from heme-induced oxidative damage to mitochondria. Reduces cytochrome c from Fe3+ (ferric) to the Fe2+ (ferrous) state through formation of superoxide anion radicals in the presence of ascorbate or NADH/NADPH electron donor cofactors, ascorbate being the preferred cofactor. Has a chaperone role in facilitating the correct folding of bikunin in the endoplasmic reticulum compartment. Functionally, kunitz-type serine protease inhibitor and structural component of extracellular matrix with a role in extracellular space remodeling and cell adhesion. Among others, has antiprotease activity toward kallikrein, a protease involved in airway inflammation; inhibits GZMK/granzyme, a granule-stored serine protease involved in NK and T cell cytotoxic responses; and inhibits PLG/plasmin, a protease required for activation of matrix metalloproteinases. As part of I-alpha-I complex, provides for the heavy chains to be transferred from I-alpha-I complex to hyaluronan in the presence of TNFAIP6, in a dynamic process that releases free bikunin and remodels extracellular matrix proteoglycan structures. Free bikunin, but not its heavy chain-bound form, acts as a potent protease inhibitor in airway secretions. Part of hyaluronan-rich extracellular matrix that surrounds oocyte during cumulus oophorus expansion, an indispensable process for proper ovulation. Also inhibits calcium oxalate crystallization. In terms of biological role, kunitz-type serine protease inhibitor. Has high catalytic efficiency for F10/blood coagulation factor Xa and may act as an anticoagulant by inhibiting prothrombin activation. Inhibits trypsin and mast cell CMA1/chymase and tryptase proteases. The chain is Protein AMBP (Ambp) from Rattus norvegicus (Rat).